The following is a 323-amino-acid chain: Dehydrogenase/reductase SDR family member 7B (323 aa).

Residues Met-1–Thr-4 lie on the Cytoplasmic side of the membrane. Residues Ser-5 to Leu-25 traverse the membrane as a helical; Signal-anchor for type II membrane protein segment. Residues Gln-26–Leu-272 lie on the Lumenal side of the membrane. The NAD(+) site is built by Ser-46 and Leu-48. Ser-178 is a binding site for substrate. NAD(+)-binding residues include Tyr-191, Lys-195, and Thr-226. Catalysis depends on Tyr-191, which acts as the Proton acceptor.

It belongs to the short-chain dehydrogenases/reductases (SDR) family.

Its subcellular location is the endoplasmic reticulum membrane. Functionally, putative oxidoreductase. The polypeptide is Dehydrogenase/reductase SDR family member 7B (dhrs7b) (Xenopus laevis (African clawed frog)).